The primary structure comprises 1374 residues: Sterol 3-beta-glucosyltransferase (1374 aa).

Positions 1-14 (MRPLRDDAKRRADR) are enriched in basic and acidic residues. 3 disordered regions span residues 1 to 60 (MRPL…RDGN), 83 to 190 (ARFD…PRAA), and 206 to 227 (TSAT…QPQS). Polar residues predominate over residues 16–28 (LSASMKPTSSNRP). The segment covering 29–41 (FSDRVPDRFKDGD) has biased composition (basic and acidic residues). Residues 101–112 (VEQTTGKASSRT) show a composition bias toward polar residues. A compositionally biased stretch (basic and acidic residues) spans 125–138 (KRSEPSKLVLEERG). The GRAM 1 domain maps to 234–283 (MRLMKMFEFAKPEKVLVEYACSLLQSMLLQGYMYVTEGHICFYAYLPKKS). The 98-residue stretch at 285-382 (VAIKSGYLSK…WVKALQQVIF (98 aa)) folds into the PH domain. Residues 458 to 538 (ATKEAQDQHD…SMTDTTESAS (81 aa)) are disordered. Basic and acidic residues-rich tracts occupy residues 461–473 (EAQD…HQPE) and 490–499 (SDQRREDSPR). Residues 503–538 (SSVGNENQGSADSFAEQGTGSSPIIQSMTDTTESAS) are compositionally biased toward polar residues. The GRAM 2 domain maps to 704–770 (DRFRAHFALP…KDIENVEKEK (67 aa)). UDP-alpha-D-glucose is bound by residues Ser-893, Arg-894, Asp-896, Ala-1196, His-1198, His-1211, Gly-1215, Thr-1216, Asp-1235, and Gln-1236. A compositionally biased stretch (polar residues) spans 1314 to 1325 (ASSTPFSPTPTA). A disordered region spans residues 1314 to 1338 (ASSTPFSPTPTAKASPDGGDDDLDD).

It belongs to the glycosyltransferase 28 family.

Its subcellular location is the cytoplasm. The protein resides in the preautophagosomal structure membrane. The catalysed reaction is a sterol + UDP-alpha-D-glucose = a sterol 3-beta-D-glucoside + UDP + H(+). It catalyses the reaction ergosterol + UDP-alpha-D-glucose = ergosteryl 3-beta-D-glucoside + UDP + H(+). Its function is as follows. Sterol glycosyltransferase responsible for the glycosylation of ergosterol to form ergosterol-glucoside. The sequence is that of Sterol 3-beta-glucosyltransferase from Penicillium rubens (strain ATCC 28089 / DSM 1075 / NRRL 1951 / Wisconsin 54-1255) (Penicillium chrysogenum).